The following is a 210-amino-acid chain: Probable GTP-binding protein EngB (210 aa).

In terms of domain architecture, EngB-type G spans 25–199; it reads CGIEVAFAGR…RQKLDSWFSE (175 aa). GTP is bound by residues 33–40, 60–64, 78–81, 145–148, and 178–180; these read GRSNAGKS, GRTQL, DLPG, TKAD, and FSS. Mg(2+) contacts are provided by serine 40 and threonine 62.

Belongs to the TRAFAC class TrmE-Era-EngA-EngB-Septin-like GTPase superfamily. EngB GTPase family. Mg(2+) is required as a cofactor.

Its function is as follows. Necessary for normal cell division and for the maintenance of normal septation. In Salmonella agona (strain SL483), this protein is Probable GTP-binding protein EngB.